A 534-amino-acid polypeptide reads, in one-letter code: Chaperonin GroEL, chloroplastic (534 aa).

ATP is bound by residues 29 to 32 (TLGP), 86 to 90 (DGTTT), glycine 414, and aspartate 496.

The protein belongs to the chaperonin (HSP60) family. Forms a cylinder of 14 subunits composed of two heptameric rings stacked back-to-back. Interacts with the co-chaperonin GroES.

It is found in the plastid. Its subcellular location is the chloroplast. It catalyses the reaction ATP + H2O + a folded polypeptide = ADP + phosphate + an unfolded polypeptide.. Together with its co-chaperonin GroES, plays an essential role in assisting protein folding. The GroEL-GroES system forms a nano-cage that allows encapsulation of the non-native substrate proteins and provides a physical environment optimized to promote and accelerate protein folding. This chain is Chaperonin GroEL, chloroplastic, found in Galdieria sulphuraria (Red alga).